A 182-amino-acid chain; its full sequence is Large ribosomal subunit protein uL6 (182 aa).

It belongs to the universal ribosomal protein uL6 family. As to quaternary structure, part of the 50S ribosomal subunit.

This protein binds to the 23S rRNA, and is important in its secondary structure. It is located near the subunit interface in the base of the L7/L12 stalk, and near the tRNA binding site of the peptidyltransferase center. This chain is Large ribosomal subunit protein uL6, found in Desulforamulus reducens (strain ATCC BAA-1160 / DSM 100696 / MI-1) (Desulfotomaculum reducens).